The sequence spans 284 residues: Prestalk D11 protein (284 aa).

Residues 1–25 (MLNKLILLLILSSCLVLSVKSEVNV) form the signal peptide. The stretch at 25 to 64 (VDCSLVRCAQPICKPHYRLNMTDSCCGRCEPCTDVACTLQ) is one A-1 repeat. Residues 65-82 (VKYCQDGEVPTGCCPCTL) form a B-1 repeat. Residues 88 to 126 (DCSLVKCARPVCKPYYRLNMTDSCCGRCEPCTGVACTLQ) form an A-2 repeat. Residues 127 to 144 (IKYCKDGEVPTGCCPCTP) form a B-2 repeat. A C-1 repeat occupies 145–159 (QPTKKPDCSKVPCPK). A B-3 repeat occupies 161-178 (LKYCQEGELPTGCCPCTP). One copy of the C-2 repeat lies at 179–193 (QPTKKPDCSRVPCPK). The stretch at 195-212 (LKYCKEGELPTGCCPCTP) is one B-4 repeat. Residues 213-228 (QPTKKPDCSDVMCTMD) form a C-3 repeat. The B-5 repeat unit spans residues 229–246 (IRYCKNGELPTGCCPCTP). The stretch at 247–262 (QETKVPDCSKAMCTMD) is one C-4 repeat. One copy of the B-6 repeat lies at 263-278 (IKYCKPGEKPFGCCPC).

The polypeptide is Prestalk D11 protein (ampA) (Dictyostelium discoideum (Social amoeba)).